An 85-amino-acid polypeptide reads, in one-letter code: Phosphocarrier protein HPr (85 aa).

The HPr domain occupies 1–85; it reads MFQKEIKINA…HLSKIMTELE (85 aa). His15 serves as the catalytic Pros-phosphohistidine intermediate.

The protein belongs to the HPr family.

It is found in the cytoplasm. Its function is as follows. General (non sugar-specific) component of the phosphoenolpyruvate-dependent sugar phosphotransferase system (sugar PTS). This major carbohydrate active-transport system catalyzes the phosphorylation of incoming sugar substrates concomitantly with their translocation across the cell membrane. The phosphoryl group from phosphoenolpyruvate (PEP) is transferred to the phosphoryl carrier protein HPr by enzyme I. Phospho-HPr then transfers it to the PTS EIIA domain. The chain is Phosphocarrier protein HPr (ptsH) from Buchnera aphidicola subsp. Schizaphis graminum (strain Sg).